We begin with the raw amino-acid sequence, 195 residues long: Peptidyl-tRNA hydrolase (195 aa).

Tyrosine 17 is a tRNA binding site. Histidine 22 serves as the catalytic Proton acceptor. TRNA-binding residues include phenylalanine 68, asparagine 70, and asparagine 116.

It belongs to the PTH family. As to quaternary structure, monomer.

It localises to the cytoplasm. It carries out the reaction an N-acyl-L-alpha-aminoacyl-tRNA + H2O = an N-acyl-L-amino acid + a tRNA + H(+). Its function is as follows. Hydrolyzes ribosome-free peptidyl-tRNAs (with 1 or more amino acids incorporated), which drop off the ribosome during protein synthesis, or as a result of ribosome stalling. Catalyzes the release of premature peptidyl moieties from peptidyl-tRNA molecules trapped in stalled 50S ribosomal subunits, and thus maintains levels of free tRNAs and 50S ribosomes. This Pectobacterium atrosepticum (strain SCRI 1043 / ATCC BAA-672) (Erwinia carotovora subsp. atroseptica) protein is Peptidyl-tRNA hydrolase.